The chain runs to 119 residues: Ribonuclease P protein component (119 aa).

Belongs to the RnpA family. Consists of a catalytic RNA component (M1 or rnpB) and a protein subunit.

The enzyme catalyses Endonucleolytic cleavage of RNA, removing 5'-extranucleotides from tRNA precursor.. Functionally, RNaseP catalyzes the removal of the 5'-leader sequence from pre-tRNA to produce the mature 5'-terminus. It can also cleave other RNA substrates such as 4.5S RNA. The protein component plays an auxiliary but essential role in vivo by binding to the 5'-leader sequence and broadening the substrate specificity of the ribozyme. In Streptococcus pyogenes serotype M1, this protein is Ribonuclease P protein component.